A 350-amino-acid polypeptide reads, in one-letter code: Geranylgeranyl pyrophosphate synthase (350 aa).

Residues K66, R69, and H98 each coordinate isopentenyl diphosphate. 2 residues coordinate Mg(2+): D105 and D109. R114 serves as a coordination point for dimethylallyl diphosphate. R115 is a binding site for isopentenyl diphosphate. Dimethylallyl diphosphate-binding residues include K200, T201, Q236, N243, and K263.

This sequence belongs to the FPP/GGPP synthase family. Mg(2+) serves as cofactor.

The catalysed reaction is isopentenyl diphosphate + dimethylallyl diphosphate = (2E)-geranyl diphosphate + diphosphate. It carries out the reaction isopentenyl diphosphate + (2E)-geranyl diphosphate = (2E,6E)-farnesyl diphosphate + diphosphate. The enzyme catalyses isopentenyl diphosphate + (2E,6E)-farnesyl diphosphate = (2E,6E,10E)-geranylgeranyl diphosphate + diphosphate. Its pathway is secondary metabolite biosynthesis; terpenoid biosynthesis. Its function is as follows. Geranylgeranyl pyrophosphate synthase; part of the gene cluster that mediates the biosynthesis of pleuromutilin, a tricyclic diterpene showing antibacterial properties. The geranylgeranyl diphosphate (GGPP) synthase catalyzes the first step in pleuromutilin biosynthesis. GGPP is then substrate of the premutilin synthase (PS) to yield premutilin. Premutilin synthase is a bifunctional enzyme composed of the fusion of a class II diterpene cyclase (DTC) and a class I diterpene synthase (DTS), with the corresponding domains and active sites containing characteristic aspartate-rich motifs. GGPP is first converted to mutildienyl-diphosphate (MPP) at the class II DTC site. MPP is subsequently further cyclized at the class I DTS site, followed by a 1,5-hydride shift and addition of water prior to terminating deprotonation, to yield premutilin. In addition to the aforementioned GGPP synthase and bifunctional diterpene synthase, the cluster also contains three cytochrome P450 monooxygenases, a short-chain alcohol dehydrogenase, and an acyltransferase, involved in the conversion of premutilin to pleuromutilin. The cytochrome P450 monooxygenases P450-1 and P450-2 hydroxylate premutilin at C-11 and C-3, respectively, producing 11-hydroxypremutilin and 3-hydroxypremutilin. The combination of the actions of both ple5 and ple6 leads to the production of 3,11-dihydroxypremutilin. The short chain dehydrogenase SDR further converts 3,11-dihydroxypremutilin into mutilin. The acetyltransferase ATF then acetylates mutilin to produce 14-O-acetylmutilin. Finally, the cytochrome P450 monooxygenase P450-3 catalyzes hydroxylation on the alpha position of the acetyl side chain of 14-O-acetylmutilin to yield pleuromutilin. This chain is Geranylgeranyl pyrophosphate synthase, found in Clitopilus passeckerianus (Pleurotus passeckerianus).